Reading from the N-terminus, the 245-residue chain is tRNA1(Val) (adenine(37)-N6)-methyltransferase (245 aa).

Belongs to the methyltransferase superfamily. tRNA (adenine-N(6)-)-methyltransferase family.

Its subcellular location is the cytoplasm. It carries out the reaction adenosine(37) in tRNA1(Val) + S-adenosyl-L-methionine = N(6)-methyladenosine(37) in tRNA1(Val) + S-adenosyl-L-homocysteine + H(+). Functionally, specifically methylates the adenine in position 37 of tRNA(1)(Val) (anticodon cmo5UAC). The protein is tRNA1(Val) (adenine(37)-N6)-methyltransferase of Erwinia tasmaniensis (strain DSM 17950 / CFBP 7177 / CIP 109463 / NCPPB 4357 / Et1/99).